Reading from the N-terminus, the 604-residue chain is ATP-dependent RNA helicase DED1 (604 aa).

Polar residues predominate over residues 1 to 19; it reads MAELSEQVQNLSINDNNEN. The interval 1 to 55 is disordered; the sequence is MAELSEQVQNLSINDNNENGYVPPHLRGKPRSARNNSSNYNNNNGGYNGGRGGGS. The residue at position 2 (alanine 2) is an N-acetylalanine. Residues 34 to 45 are compositionally biased toward low complexity; the sequence is RNNSSNYNNNNG. The span at 46–55 shows a compositional bias: gly residues; it reads GYNGGRGGGS. Omega-N-methylarginine is present on arginine 51. Arginine 62 is modified (dimethylated arginine; alternate). Omega-N-methylarginine; alternate is present on arginine 62. A compositionally biased stretch (gly residues) spans 67–76; it reads NGGFFGGNNG. Residues 67-94 form a disordered region; the sequence is NGGFFGGNNGGSRSNGRSGGRWIDGKHV. The Q motif signature appears at 142-170; that stretch reads TEFTSPPLDGLLLENIKLARFTKPTPVQK. Lysine 158 participates in a covalent cross-link: Glycyl lysine isopeptide (Lys-Gly) (interchain with G-Cter in ubiquitin). Positions 173–362 constitute a Helicase ATP-binding domain; it reads VPIVANGRDL…RDFLSDYIFL (190 aa). Residue 186 to 193 coordinates ATP; sequence AQTGSGKT. Serine 215, serine 218, and serine 263 each carry phosphoserine. Residues 306-309 carry the DEAD box motif; it reads DEAD. The Helicase C-terminal domain maps to 373-533; the sequence is NITQKVLYVE…EVPSFLKDAM (161 aa). Residues 533–604 are disordered; the sequence is MMSAPGSRSN…SGGSNNSSWW (72 aa). A phosphoserine mark is found at serine 535, serine 539, and serine 543. Position 545 is a dimethylated arginine; alternate (arginine 545). An Omega-N-methylarginine; alternate modification is found at arginine 545. Phosphoserine is present on residues serine 572 and serine 576. Arginine 578 bears the Omega-N-methylarginine mark. Residues 584 to 604 show a composition bias toward low complexity; sequence GSDSKSSGWGNSGGSNNSSWW. A Phosphoserine modification is found at serine 598.

It belongs to the DEAD box helicase family. DDX3/DED1 subfamily. Interacts with the L-A virus GAG protein and the whole L-A virus particles.

It localises to the cytoplasm. The enzyme catalyses ATP + H2O = ADP + phosphate + H(+). ATP-binding RNA helicase involved in translation initiation. Remodels RNA in response to ADP and ATP concentrations by facilitating disruption, but also formation of RNA duplexes. Has weak ATP-dependent affinity for dsRNA, but strong ATP-dependent affinity for ssRNA. Acts as a virus host factor involved in the replication of the MBV and the L-A viruses by promoting the negative-strand RNA synthesis. May be involved in recognition of the preinitiation complex and DNA binding of the RNA polymerase III and play a role in mRNA splicing. The protein is ATP-dependent RNA helicase DED1 of Saccharomyces cerevisiae (strain ATCC 204508 / S288c) (Baker's yeast).